A 2590-amino-acid polypeptide reads, in one-letter code: 5-methylorsellinic acid synthase (2590 aa).

The segment at leucine 6 to alanine 255 is N-terminal acylcarrier protein transacylase domain (SAT). Positions glycine 369–glutamine 784 constitute a Ketosynthase family 3 (KS3) domain. Active-site for beta-ketoacyl synthase activity residues include cysteine 534, histidine 669, and histidine 707. Residues leucine 891 to proline 1191 are malonyl-CoA:ACP transacylase (MAT) domain. The For acyl/malonyl transferase activity role is filled by serine 978. The tract at residues proline 1263–serine 1393 is N-terminal hotdog fold. The PKS/mFAS DH domain maps to proline 1263–lysine 1569. A product template (PT) domain region spans residues serine 1267–leucine 1568. Residue histidine 1297 is the Proton acceptor; for dehydratase activity of the active site. The segment at threonine 1421–lysine 1569 is C-terminal hotdog fold. The active-site Proton donor; for dehydratase activity is aspartate 1481. The tract at residues leucine 1587–alanine 1612 is disordered. Carrier domains are found at residues alanine 1617 to threonine 1691 and serine 1736 to proline 1812. Residues serine 1651 and serine 1772 each carry the O-(pantetheine 4'-phosphoryl)serine modification. The methyltransferase (CMeT) domain stretch occupies residues glutamine 1980–aspartate 2212. Residues leucine 2282–leucine 2590 form a thioesterase (TE) domain region.

It catalyses the reaction 3 malonyl-CoA + acetyl-CoA + S-adenosyl-L-methionine + H(+) = 5-methylorsellinate + S-adenosyl-L-homocysteine + 3 CO2 + 4 CoA. It functions in the pathway secondary metabolite biosynthesis. Functionally, non-reducing polyketide synthase; part of the cluster A that mediates the biosynthesis of azasperpyranones, members of the azaphilone family that exhibit anti-cancer activities. Azasperpyranones are synthesized by 2 clusters, A and B. Cluster A is responsible for the production of the polyhydric phenol moiety while the azaphilonoid scaffold is produced by the cluster B. The non-reducing polyketide synthase ATEG_03629 produces 5-methyl orsellinic acid, which is then reduced to 5-methyl orsellinic aldehyde by the NRPS-like protein ATEG_03630. 5-methyl orsellinic aldehyde is then first hydroxylated by the FAD-dependent monooxygenase ATEG_03635 and subsequently hydroxylated by the cytochrome P450 monooxygenase ATEG_03631 to produce the unstable polyhydric phenol precursor of azasperpyranones. On the other hand, the polyketide synthase ATEG_07659 is responsible for producing the 3,5-dimethyloctadienone moiety from acetyl-CoA, three malonyl-CoA, and two S-adenosyl methionines (SAM). The 3,5-dimethyloctadienone moiety is then loaded onto the SAT domain of ATEG_07661 and extended with four malonyl-CoA and one SAM, which leads to the formation of 2,4-dihydroxy-6-(5,7-dimethyl-2-oxo-trans-3-trans-5-nonadienyl)-3-methylbenzaldehyde (compound 8) after reductive release and aldol condensation. The FAD-dependent monooxygenase ATEG_07662 is the next enzyme in the biosynthesis sequence and hydroxylates the side chain at the benzylic position of compound 8. In Aspergillus nidulans, afoF, the ortholog of the FAD-dependent oxygenase ATEG_07660, is the key enzyme for the biosynthesis of asperfuranone by catalyzing the hydroxylation at C-8 of to prevent the formation of a six-membered ring hemiacetal intermediate and thus facilitating the formation of a five-membered ring to produce asperfuranone. In Aspergillus terreus, ATEG_07660 is probably not functional, which leads to the formation of the six-membered ring hemiacetal intermediate presperpyranone instead of asperfuranone. Finally, ATEG_03636 is involved in the condensation of the polyhydric phenol moiety produced by cluster A and the perasperpyranone precursor produced by cluster B, to yield azasperpyranone A. Further modifications of azasperpyranone A result in the production of derivatives, including azasperpyranone B to F. This Aspergillus terreus (strain NIH 2624 / FGSC A1156) protein is 5-methylorsellinic acid synthase.